A 259-amino-acid polypeptide reads, in one-letter code: 14-3-3-like protein (259 aa).

A disordered region spans residues 238–259 (MQDPAAGDDREGADMKVEDAEP). Residues 244–259 (GDDREGADMKVEDAEP) show a composition bias toward basic and acidic residues.

This sequence belongs to the 14-3-3 family.

This is 14-3-3-like protein from Chlamydomonas reinhardtii (Chlamydomonas smithii).